Consider the following 283-residue polypeptide: Homeobox-leucine zipper protein HAT2 (283 aa).

Positions 64-134 (VNCEEDTGVS…GETSRKKLRL (71 aa)) are disordered. Low complexity predominate over residues 73–84 (SSPNSTISSTIS). Positions 127–186 (TSRKKLRLSKDQSAFLEETFKEHNTLNPKQKLALAKKLNLTARQVEVWFQNRRARTKLKQ) form a DNA-binding region, homeobox. Residues 194-215 (LKRCVEKLTEENRRLQKEAMEL) form a leucine-zipper region.

Belongs to the HD-ZIP homeobox family. Class II subfamily. In terms of assembly, interacts with RBR1.

Its subcellular location is the nucleus. In terms of biological role, probable transcription factor that plays a role in auxin-mediated morphogenesis. Negatively regulates lateral root elongation. The polypeptide is Homeobox-leucine zipper protein HAT2 (HAT2) (Arabidopsis thaliana (Mouse-ear cress)).